Consider the following 594-residue polypeptide: Glomulin (594 aa).

Position 2 is an N-acetylalanine (alanine 2). The segment at 2 to 553 (AVEELQSIIK…EEIPNMPPEM (552 aa)) is alpha-helical region with structural similarity to HEAT repeats. The interval 300–594 (IDQLPMVLSP…STSEENIGIK (295 aa)) is important for interaction with RBX1.

As to quaternary structure, interacts with FKBP4 and FKBP1A. Isoform 1: Interacts with RBX1 (via RING domain). Identified in complexes that contain RBX1 plus one of the cullins CUL1, CUL2, CUL3, and CUL4A. Identified in a SCF complex composed of CUL1, RBX1, SKP1, FBXW7 and GLMN. Component of a SCF-like complex consisting of CUL7, RBX1, SKP1, FBXW8 and GLMN. Interacts with unphosphorylated MET and is released upon MET phosphorylation. Post-translationally, phosphorylated on tyrosine residues. In terms of tissue distribution, ubiquitous.

In terms of biological role, regulatory component of cullin-RING-based SCF (SKP1-Cullin-F-box protein) E3 ubiquitin-protein ligase complexes. Inhibits E3 ubiquitin ligase activity by binding to RBX1 (via RING domain) and inhibiting its interaction with the E2 ubiquitin-conjugating enzyme CDC34. Inhibits RBX1-mediated neddylation of CUL1. Required for normal stability and normal cellular levels of key components of SCF ubiquitin ligase complexes, including FBXW7, RBX1, CUL1, CUL2, CUL3, CUL4A, and thereby contributes to the regulation of CCNE1 and MYC levels. Essential for normal development of the vasculature. Contributes to the regulation of RPS6KB1 phosphorylation. The chain is Glomulin (GLMN) from Homo sapiens (Human).